Consider the following 26-residue polypeptide: Hemocyanin subunit 3 (26 aa).

It belongs to the tyrosinase family. Hemocyanin subfamily. Hemolymph.

It localises to the secreted. The protein localises to the extracellular space. Hemocyanins are copper-containing oxygen carriers occurring freely dissolved in the hemolymph of many mollusks and arthropods. The sequence is that of Hemocyanin subunit 3 from Homarus americanus (American lobster).